Consider the following 68-residue polypeptide: ATP synthase F(0) complex subunit 8 (68 aa).

Residues 8–24 (TWSITIVSMIITLFIMF) form a helical membrane-spanning segment. At K54 the chain carries N6-acetyllysine; alternate. Position 54 is an N6-succinyllysine; alternate (K54). An N6-acetyllysine modification is found at K57.

Belongs to the ATPase protein 8 family. As to quaternary structure, component of the ATP synthase complex composed at least of ATP5F1A/subunit alpha, ATP5F1B/subunit beta, ATP5MC1/subunit c (homooctomer), MT-ATP6/subunit a, MT-ATP8/subunit 8, ATP5ME/subunit e, ATP5MF/subunit f, ATP5MG/subunit g, ATP5MK/subunit k, ATP5MJ/subunit j, ATP5F1C/subunit gamma, ATP5F1D/subunit delta, ATP5F1E/subunit epsilon, ATP5PF/subunit F6, ATP5PB/subunit b, ATP5PD/subunit d, ATP5PO/subunit OSCP. ATP synthase complex consists of a soluble F(1) head domain (subunits alpha(3) and beta(3)) - the catalytic core - and a membrane F(0) domain - the membrane proton channel (subunits c, a, 8, e, f, g, k and j). These two domains are linked by a central stalk (subunits gamma, delta, and epsilon) rotating inside the F1 region and a stationary peripheral stalk (subunits F6, b, d, and OSCP). Interacts with PRICKLE3.

It localises to the mitochondrion membrane. In terms of biological role, subunit 8, of the mitochondrial membrane ATP synthase complex (F(1)F(0) ATP synthase or Complex V) that produces ATP from ADP in the presence of a proton gradient across the membrane which is generated by electron transport complexes of the respiratory chain. ATP synthase complex consist of a soluble F(1) head domain - the catalytic core - and a membrane F(1) domain - the membrane proton channel. These two domains are linked by a central stalk rotating inside the F(1) region and a stationary peripheral stalk. During catalysis, ATP synthesis in the catalytic domain of F(1) is coupled via a rotary mechanism of the central stalk subunits to proton translocation. In vivo, can only synthesize ATP although its ATP hydrolase activity can be activated artificially in vitro. Part of the complex F(0) domain. This chain is ATP synthase F(0) complex subunit 8, found in Ceratotherium simum (White rhinoceros).